Here is a 599-residue protein sequence, read N- to C-terminus: Elongation factor 4 (599 aa).

One can recognise a tr-type G domain in the interval 2–184 (KNIRNFSIIA…RLVRDIPPPE (183 aa)). Residues 14 to 19 (DHGKST) and 131 to 134 (NKID) contribute to the GTP site.

This sequence belongs to the TRAFAC class translation factor GTPase superfamily. Classic translation factor GTPase family. LepA subfamily.

It is found in the cell inner membrane. It catalyses the reaction GTP + H2O = GDP + phosphate + H(+). In terms of biological role, required for accurate and efficient protein synthesis under certain stress conditions. May act as a fidelity factor of the translation reaction, by catalyzing a one-codon backward translocation of tRNAs on improperly translocated ribosomes. Back-translocation proceeds from a post-translocation (POST) complex to a pre-translocation (PRE) complex, thus giving elongation factor G a second chance to translocate the tRNAs correctly. Binds to ribosomes in a GTP-dependent manner. The protein is Elongation factor 4 of Escherichia coli (strain UTI89 / UPEC).